Reading from the N-terminus, the 392-residue chain is Probable tRNA sulfurtransferase (392 aa).

The region spanning Gly-63 to His-169 is the THUMP domain. Residues Leu-187 to Val-188, Arg-270, Gly-292, and Gln-301 each bind ATP.

The protein belongs to the ThiI family.

The protein resides in the cytoplasm. It catalyses the reaction [ThiI sulfur-carrier protein]-S-sulfanyl-L-cysteine + a uridine in tRNA + 2 reduced [2Fe-2S]-[ferredoxin] + ATP + H(+) = [ThiI sulfur-carrier protein]-L-cysteine + a 4-thiouridine in tRNA + 2 oxidized [2Fe-2S]-[ferredoxin] + AMP + diphosphate. The catalysed reaction is [ThiS sulfur-carrier protein]-C-terminal Gly-Gly-AMP + S-sulfanyl-L-cysteinyl-[cysteine desulfurase] + AH2 = [ThiS sulfur-carrier protein]-C-terminal-Gly-aminoethanethioate + L-cysteinyl-[cysteine desulfurase] + A + AMP + 2 H(+). The protein operates within cofactor biosynthesis; thiamine diphosphate biosynthesis. In terms of biological role, catalyzes the ATP-dependent transfer of a sulfur to tRNA to produce 4-thiouridine in position 8 of tRNAs, which functions as a near-UV photosensor. Also catalyzes the transfer of sulfur to the sulfur carrier protein ThiS, forming ThiS-thiocarboxylate. This is a step in the synthesis of thiazole, in the thiamine biosynthesis pathway. The sulfur is donated as persulfide by IscS. The polypeptide is Probable tRNA sulfurtransferase (Halobacterium salinarum (strain ATCC 29341 / DSM 671 / R1)).